Here is an 89-residue protein sequence, read N- to C-terminus: UPF0223 protein BcerKBAB4_3787 (89 aa).

The protein belongs to the UPF0223 family.

The polypeptide is UPF0223 protein BcerKBAB4_3787 (Bacillus mycoides (strain KBAB4) (Bacillus weihenstephanensis)).